The primary structure comprises 152 residues: 3-hydroxyacyl-[acyl-carrier-protein] dehydratase FabZ (152 aa).

His54 is an active-site residue.

This sequence belongs to the thioester dehydratase family. FabZ subfamily.

The protein localises to the cytoplasm. It carries out the reaction a (3R)-hydroxyacyl-[ACP] = a (2E)-enoyl-[ACP] + H2O. Functionally, involved in unsaturated fatty acids biosynthesis. Catalyzes the dehydration of short chain beta-hydroxyacyl-ACPs and long chain saturated and unsaturated beta-hydroxyacyl-ACPs. The protein is 3-hydroxyacyl-[acyl-carrier-protein] dehydratase FabZ of Shewanella woodyi (strain ATCC 51908 / MS32).